We begin with the raw amino-acid sequence, 454 residues long: MNINEPRDGGGFVLPFFNDSKKSRKSHAGRDSLKSNRVPFTKWVPDTVSYTTKPLKNAHRWLHLHNKTRNHFVATVAEFAGTTLFLFFAFSGTQVALLATPANDSNVVGTPSNPAQLLYVSLCFGFSLAVNAWVFFRISGGLFNPAVTMGMCIVGALPYFRGLLLIFAQIIGGIAAAAIVSALFPGPITFRTSLGGGTSIVQGLFIEMFLTAELVFTIFMLAAEKHKGTFIAPIGIGLSLFIAELTGVYFTGGSVNPARSFGPSVVSGQFTGYHWIYWVGPILGAILASAFYKFIKMLEYETANPGQDAGRVGEVIDPEAQAIKNRVSFASEGLVGRELDESGASHVHENGNHFGAPKEYGTKRRPFSDSPAPPNANDQFAGLSEGGLHTDEFANENIGGGHSGEGAMHRNKRDSEGTLVGNGKKGVLKVGAGGTGGAAVGSTNENLRDNTHNN.

Topologically, residues M1–H71 are cytoplasmic. Residues F72–G92 traverse the membrane as a helical segment. Over T93 to A115 the chain is Extracellular. N103 is a glycosylation site (N-linked (GlcNAc...) asparagine). A helical membrane pass occupies residues Q116–F136. At R137–L163 the chain is on the cytoplasmic side. An NPA 1 motif is present at residues N144–A146. A helical transmembrane segment spans residues L164–F184. Topologically, residues P185–Q202 are extracellular. A helical transmembrane segment spans residues G203–A223. Topologically, residues E224–T229 are cytoplasmic. Residues F230–F250 form a helical membrane-spanning segment. Over T251–H274 the chain is Extracellular. The short motif at N256–A258 is the NPA 2 element. A helical membrane pass occupies residues W275 to I295. Topologically, residues K296–N454 are cytoplasmic. Positions G343–N454 are disordered.

This sequence belongs to the MIP/aquaporin (TC 1.A.8) family.

Its subcellular location is the membrane. The enzyme catalyses H2O(in) = H2O(out). Its function is as follows. Water channel required to facilitate the transport of water across membranes. Involved in conidiation. The polypeptide is Aquaporin-7 (Botryotinia fuckeliana (strain B05.10) (Noble rot fungus)).